We begin with the raw amino-acid sequence, 407 residues long: Heparan-sulfate 6-O-sulfotransferase 1-B (407 aa).

Topologically, residues 8–14 (MVERTSK) are cytoplasmic. The chain crosses the membrane as a helical; Signal-anchor for type II membrane protein span at residues 15-35 (FLLIVVGSVFFMLILYQYVAP). At 36 to 407 (GVINFGSPHG…DYMNHIINGW (372 aa)) the chain is on the lumenal side. A 3'-phosphoadenylyl sulfate-binding site is contributed by 92-100 (HIQKTGGTT). Residues 122–123 (KK), Arg-139, Trp-144, and His-149 contribute to the substrate site. Catalysis depends on His-149, which acts as the Proton acceptor. 2 residues coordinate 3'-phosphoadenylyl sulfate: Arg-183 and Ser-191. His-195 and Trp-202 together coordinate substrate. An N-linked (GlcNAc...) asparagine glycan is attached at Asn-262. A 3'-phosphoadenylyl sulfate-binding site is contributed by 315–317 (MQY). Asn-318 is a glycosylation site (N-linked (GlcNAc...) asparagine). 321–322 (RA) contacts 3'-phosphoadenylyl sulfate. A glycan (N-linked (GlcNAc...) asparagine) is linked at Asn-329.

The protein belongs to the sulfotransferase 6 family. As to expression, during early somitogenesis, first expressed in floor plate and somites. During mid-somitogenesis, expressed strongly in somites and more weakly in eye and hindbrain. During late somitogenesis, expressed in eye, hindbrain and posterior somites. At 24 hours post-fertilization (hpf), expressed in lens, forebrain, hindbrain, otic vesicle, anterior spinal cord neurons and posterior somites. At 36 hpf, expressed in the retinal ciliary marginal zone, brain, pancreas and weakly in pectoral fin. At 48 hpf, expressed in the retinal ciliary marginal zone, retinal ganglion cells, rhombomeres, otic vesicle and weakly in pectoral fin.

The protein localises to the membrane. The enzyme catalyses alpha-D-glucosaminyl-[heparan sulfate](n) + 3'-phosphoadenylyl sulfate = 6-sulfo-alpha-D-glucosaminyl-[heparan sulfate](n) + adenosine 3',5'-bisphosphate + H(+). Functionally, 6-O-sulfation enzyme which catalyzes the transfer of sulfate from 3'-phosphoadenosine 5'-phosphosulfate (PAPS) to position 6 of the N-sulfoglucosamine residue (GlcNS) of heparan sulfate. This Danio rerio (Zebrafish) protein is Heparan-sulfate 6-O-sulfotransferase 1-B.